A 589-amino-acid chain; its full sequence is Kelch-like protein 25 (589 aa).

In terms of domain architecture, BTB spans 46–114; sequence TDVTLWAGDR…AYSSRIVINE (69 aa). The 102-residue stretch at 149 to 250 folds into the BACK domain; sequence CLGMMVLSDA…LPSDCLKNAV (102 aa). Kelch repeat units follow at residues 296–340, 341–388, 389–444, 446–492, 493–538, and 539–585; these read TLLI…AIGC, KVYV…ELEN, CLYV…SAKL, LFVF…VLGS, QIFI…ASGN, and KLYV…STWK.

As to quaternary structure, component of the BCR(KLHL25) E3 ubiquitin ligase complex, at least composed of CUL3, KLHL25 and RBX1.

Its pathway is protein modification; protein ubiquitination. Functionally, substrate-specific adapter of a BCR (BTB-CUL3-RBX1) E3 ubiquitin ligase complex involved in various processes, such as translation homeostasis and lipid synthesis. The BCR(KLHL25) ubiquitin ligase complex acts by mediating ubiquitination of hypophosphorylated EIF4EBP1 (4E-BP1): ubiquitination and subsequent degradation of hypophosphorylated EIF4EBP1 (4E-BP1) probably serves as a homeostatic mechanism to maintain translation and prevent eIF4E inhibition when eIF4E levels are low. The BCR(KLHL25) complex does not target EIF4EBP1 (4E-BP1) when it is hyperphosphorylated or associated with eIF4E. The BCR(KLHL25) complex also acts as a regulator of lipid synthesis by mediating ubiquitination and degradation of ACLY, thereby inhibiting lipid synthesis. BCR(KLHL25)-mediated degradation of ACLY promotes fatty acid oxidation and is required for differentiation of inducible regulatory T (iTreg) cells. The chain is Kelch-like protein 25 from Mus musculus (Mouse).